The following is a 458-amino-acid chain: UDP-N-acetylmuramate--L-alanine ligase (458 aa).

112–118 contacts ATP; the sequence is GMHGKTT.

This sequence belongs to the MurCDEF family.

The protein resides in the cytoplasm. The enzyme catalyses UDP-N-acetyl-alpha-D-muramate + L-alanine + ATP = UDP-N-acetyl-alpha-D-muramoyl-L-alanine + ADP + phosphate + H(+). The protein operates within cell wall biogenesis; peptidoglycan biosynthesis. Functionally, cell wall formation. The sequence is that of UDP-N-acetylmuramate--L-alanine ligase from Acidobacterium capsulatum (strain ATCC 51196 / DSM 11244 / BCRC 80197 / JCM 7670 / NBRC 15755 / NCIMB 13165 / 161).